The primary structure comprises 336 residues: MIDAKSEHKIAPWKIEEVNALKELLKSANVIALIDMMEVPAVQLQEIRDKIRDQMTLKMSRNTLIKRAVEEVAEETGNPEFAKLVDYLDKGAAIVVTEMNPFKLFKTLEESKSPAPIKGGAIAPCDIEVKSGSTGMPPGPFLSELKAVGIPAAIDKGKIGIKEDKVVAKEGDVISPKLAVVLSALGIKPVTVGLNVLGVYEEGVIYTSDVLRIDEEEFLGKLQKAYTNAFNLSVNAVIPTSATIETIVQKAFNDAKAVSVESAFITEKTADAILGKAHAQMIAVAKLAGDEALDDDLKEQISSSAVVATEEAPKAETKKEEKKEEAAPAAGLGLLF.

Positions Ala305–Phe336 are disordered. The span at Glu311–Ala326 shows a compositional bias: basic and acidic residues.

It belongs to the universal ribosomal protein uL10 family. Part of the 50S ribosomal subunit. Forms part of the ribosomal stalk which helps the ribosome interact with GTP-bound translation factors. Forms a heptameric L10(L12)2(L12)2(L12)2 complex, where L10 forms an elongated spine to which the L12 dimers bind in a sequential fashion.

In terms of biological role, forms part of the ribosomal stalk, playing a central role in the interaction of the ribosome with GTP-bound translation factors. This chain is Large ribosomal subunit protein uL10, found in Methanococcus vannielii (strain ATCC 35089 / DSM 1224 / JCM 13029 / OCM 148 / SB).